Reading from the N-terminus, the 159-residue chain is Large ribosomal subunit protein uL30 (159 aa).

This sequence belongs to the universal ribosomal protein uL30 family. Part of the 50S ribosomal subunit.

This Aeropyrum pernix (strain ATCC 700893 / DSM 11879 / JCM 9820 / NBRC 100138 / K1) protein is Large ribosomal subunit protein uL30.